We begin with the raw amino-acid sequence, 335 residues long: Mevalonate kinase (335 aa).

111 to 121 (PVGAGLGSSAA) contributes to the ATP binding site. The active-site Proton acceptor is the Asp-162.

Belongs to the GHMP kinase family. Mevalonate kinase subfamily. Homodimer. Mg(2+) serves as cofactor.

It is found in the cytoplasm. It carries out the reaction (R)-mevalonate + ATP = (R)-5-phosphomevalonate + ADP + H(+). The protein operates within isoprenoid biosynthesis; isopentenyl diphosphate biosynthesis via mevalonate pathway; isopentenyl diphosphate from (R)-mevalonate: step 1/3. Catalyzes the phosphorylation of (R)-mevalonate (MVA) to (R)-mevalonate 5-phosphate (MVAP). Functions in the mevalonate (MVA) pathway leading to isopentenyl diphosphate (IPP), a key precursor for the biosynthesis of isoprenoid compounds such as archaeal membrane lipids. This is Mevalonate kinase from Pyrococcus horikoshii (strain ATCC 700860 / DSM 12428 / JCM 9974 / NBRC 100139 / OT-3).